The sequence spans 581 residues: Leucine-rich repeat-containing protein 47 (581 aa).

LRR repeat units lie at residues 78–97 (QLHSLVLRRNALGPGLSPEL), 102–123 (ALRVLDLSGNALETLPPGEGLG), 132–154 (QLQSLNLSGNRLRELPADLARCA), 156–177 (RLQSLNLTGNRLDAFPPELFRP), 182–204 (LLSELAAADNCLRELSPDIAHLA), 205–227 (SLKTLDLSNNQLTEIPAELADCP), and 228–248 (KLKEINFRGNRLRDKRLEKMV). The tract at residues 262–301 (AGGRGGRSKGRQEASEKEDRKKRRERKQHRESGEGEEEVA) is disordered. Residues 271–280 (GRQEASEKED) show a composition bias toward basic and acidic residues. Phosphoserine occurs at positions 314, 430, and 519. Residues 401–436 (LGRKEAKAKELVRQLQLEAEEQRKQKKRQSVSGLHR) adopt a coiled-coil conformation.

This is Leucine-rich repeat-containing protein 47 (Lrrc47) from Mus musculus (Mouse).